The following is a 2214-amino-acid chain: Multifunctional protein URA2 (2214 aa).

Alanine 2 carries the post-translational modification N-acetylalanine. The interval 2-400 (ATIAPTAPIT…PGPRDTEFLF (399 aa)) is GATase (Glutamine amidotransferase). Positions 64, 273, and 275 each coordinate L-glutamine. Positions 228–413 (RILAIDVGMK…IQAVKEFKYT (186 aa)) constitute a Glutamine amidotransferase type-1 domain. The active-site Nucleophile; for GATase activity is the cysteine 302. Leucine 303, glutamine 306, asparagine 344, glycine 346, and phenylalanine 347 together coordinate L-glutamine. Catalysis depends on for GATase activity residues histidine 386 and glutamate 388. The segment at 401-440 (DVFIQAVKEFKYTQVLKPIAFPGGLLEDNVKAHPRIEAKK) is linker. The interval 440–980 (KVLVLGSGGL…DSHDLSFDDH (541 aa)) is CPSase A. Positions 440-1482 (KVLVLGSGGL…TNVKCAKLLI (1043 aa)) are CPSase (Carbamoyl phosphate synthase). ATP is bound by residues arginine 558, arginine 598, glycine 604, glycine 605, lysine 635, methionine 637, glutamate 642, glycine 668, isoleucine 669, histidine 670, glutamine 711, and glutamate 725. 2 ATP-grasp domains span residues 562–754 (SNAI…KLGL) and 1099–1290 (SRML…KAIM). Glutamine 711, glutamate 725, and asparagine 727 together coordinate Mg(2+). Positions 711, 725, and 727 each coordinate Mn(2+). The tract at residues 981–1482 (GVMVLGSGVY…TNVKCAKLLI (502 aa)) is CPSase B. ATP-binding residues include arginine 1135, lysine 1174, isoleucine 1176, glutamate 1181, glycine 1206, valine 1207, histidine 1208, serine 1209, glutamine 1249, and glutamate 1261. Mg(2+)-binding residues include glutamine 1249, glutamate 1261, and asparagine 1263. Mn(2+) contacts are provided by glutamine 1249, glutamate 1261, and asparagine 1263. An MGS-like domain is found at 1356–1508 (FKLPKKNILL…QTSHRTITLP (153 aa)). The interval 1483-1492 (EAISRNITLD) is linker. A defective DHOase domain region spans residues 1493–1821 (VSERDAQTSH…YNGETLVLSG (329 aa)). Positions 1822-1909 (ELVSPGAKGK…NLIRSNNPFR (88 aa)) are linker. Lysine 1853 participates in a covalent cross-link: Glycyl lysine isopeptide (Lys-Gly) (interchain with G-Cter in ubiquitin). Serine 1857 bears the Phosphoserine; by PKA mark. The ATCase (Aspartate transcarbamylase) stretch occupies residues 1910-2214 (GRHILSIKQF…LLAMVMGVDM (305 aa)). 2 residues coordinate carbamoyl phosphate: arginine 1962 and threonine 1963. Lysine 1990 is an L-aspartate binding site. Positions 2011, 2039, and 2042 each coordinate carbamoyl phosphate. The L-aspartate site is built by arginine 2072 and arginine 2134. Leucine 2173 and proline 2174 together coordinate carbamoyl phosphate.

It in the N-terminal section; belongs to the CarA family. In the 2nd section; belongs to the CarB family. This sequence in the 3rd section; belongs to the metallo-dependent hydrolases superfamily. DHOase family. CAD subfamily. The protein in the C-terminal section; belongs to the aspartate/ornithine carbamoyltransferase superfamily. ATCase family. The cofactor is Mg(2+). It depends on Mn(2+) as a cofactor.

It localises to the cytoplasm. The catalysed reaction is hydrogencarbonate + L-glutamine + 2 ATP + H2O = carbamoyl phosphate + L-glutamate + 2 ADP + phosphate + 2 H(+). It catalyses the reaction L-glutamine + H2O = L-glutamate + NH4(+). It carries out the reaction hydrogencarbonate + NH4(+) + 2 ATP = carbamoyl phosphate + 2 ADP + phosphate + 2 H(+). The enzyme catalyses carbamoyl phosphate + L-aspartate = N-carbamoyl-L-aspartate + phosphate + H(+). It participates in pyrimidine metabolism; UMP biosynthesis via de novo pathway; (S)-dihydroorotate from bicarbonate: step 1/3. It functions in the pathway pyrimidine metabolism; UMP biosynthesis via de novo pathway; (S)-dihydroorotate from bicarbonate: step 2/3. Its activity is regulated as follows. Both CPSase and ATCase activities are feedback inhibited by the end product UTP. Functionally, multifunctional protein that encodes the first 2 enzymatic activities of the de novo pyrimidine pathway: carbamoylphosphate synthetase (CPSase; EC 6.3.5.5) and aspartate transcarbamylase (ATCase; EC 2.1.3.2). The CPSase-function is accomplished in 2 steps, by a glutamine-dependent amidotransferase activity (GATase) that binds and cleaves glutamine to produce ammonia, followed by an ammonium-dependent carbamoyl phosphate synthetase, which reacts with the ammonia, hydrogencarbonate and ATP to form carbamoyl phosphate. The endogenously produced carbamoyl phosphate is sequestered and channeled to the ATCase active site. ATCase then catalyzes the formation of carbamoyl-L-aspartate from L-aspartate and carbamoyl phosphate. This chain is Multifunctional protein URA2 (URA2), found in Saccharomyces cerevisiae (strain ATCC 204508 / S288c) (Baker's yeast).